A 192-amino-acid chain; its full sequence is Potassium-transporting ATPase KdpC subunit (192 aa).

A helical transmembrane segment spans residues 14–34; the sequence is LTGVLVVLCGLIYPAMVTGIA.

Belongs to the KdpC family. The system is composed of three essential subunits: KdpA, KdpB and KdpC.

Its subcellular location is the cell membrane. Its function is as follows. Part of the high-affinity ATP-driven potassium transport (or Kdp) system, which catalyzes the hydrolysis of ATP coupled with the electrogenic transport of potassium into the cytoplasm. This subunit acts as a catalytic chaperone that increases the ATP-binding affinity of the ATP-hydrolyzing subunit KdpB by the formation of a transient KdpB/KdpC/ATP ternary complex. In Bacillus cytotoxicus (strain DSM 22905 / CIP 110041 / 391-98 / NVH 391-98), this protein is Potassium-transporting ATPase KdpC subunit.